Reading from the N-terminus, the 500-residue chain is Glycerol kinase (500 aa).

T13 contacts ADP. ATP contacts are provided by T13, T14, and S15. Position 13 (T13) interacts with sn-glycerol 3-phosphate. Residue R17 participates in ADP binding. Sn-glycerol 3-phosphate-binding residues include R83, E84, Y135, and D244. Glycerol is bound by residues R83, E84, Y135, D244, and Q245. Residues T266 and G309 each coordinate ADP. The ATP site is built by T266, G309, Q313, and G410. 2 residues coordinate ADP: G410 and N414.

The protein belongs to the FGGY kinase family.

It catalyses the reaction glycerol + ATP = sn-glycerol 3-phosphate + ADP + H(+). The protein operates within polyol metabolism; glycerol degradation via glycerol kinase pathway; sn-glycerol 3-phosphate from glycerol: step 1/1. Its activity is regulated as follows. Inhibited by fructose 1,6-bisphosphate (FBP). In terms of biological role, key enzyme in the regulation of glycerol uptake and metabolism. Catalyzes the phosphorylation of glycerol to yield sn-glycerol 3-phosphate. The chain is Glycerol kinase from Burkholderia ambifaria (strain ATCC BAA-244 / DSM 16087 / CCUG 44356 / LMG 19182 / AMMD) (Burkholderia cepacia (strain AMMD)).